The following is a 176-amino-acid chain: Sarcoplasmic calcium-binding protein (176 aa).

The residue at position 1 (Thr1) is an N-acetylthreonine. EF-hand domains lie at 3–38, 55–90, 91–126, and 127–160; these read YLVS…FTDL, KWWD…AFLA, TMTA…FGHE, and NESV…SFVT. Ca(2+) contacts are provided by Asp16, Asn18, Asp20, and Asn27. Residues Asp104, Asp106, Asp108, Ser110, and Glu115 each coordinate Ca(2+).

Like parvalbumins, SCPs seem to be more abundant in fast contracting muscles, but no functional relationship can be established from this distribution. This Mizuhopecten yessoensis (Japanese scallop) protein is Sarcoplasmic calcium-binding protein.